The following is a 105-amino-acid chain: Small ribosomal subunit protein uS10 (105 aa).

The protein belongs to the universal ribosomal protein uS10 family. As to quaternary structure, part of the 30S ribosomal subunit.

Its function is as follows. Involved in the binding of tRNA to the ribosomes. This Roseobacter denitrificans (strain ATCC 33942 / OCh 114) (Erythrobacter sp. (strain OCh 114)) protein is Small ribosomal subunit protein uS10.